A 186-amino-acid polypeptide reads, in one-letter code: Putative 5'(3')-deoxyribonucleotidase (186 aa).

The protein belongs to the 5'(3')-deoxyribonucleotidase family. Mg(2+) is required as a cofactor.

Functionally, dephosphorylates the 5' and 2'(3')-phosphates of deoxyribonucleotides. The polypeptide is Putative 5'(3')-deoxyribonucleotidase (Bordetella parapertussis (strain 12822 / ATCC BAA-587 / NCTC 13253)).